A 350-amino-acid polypeptide reads, in one-letter code: Guanine nucleotide-binding protein G(t) subunit alpha (350 aa).

The disordered stretch occupies residues 1–21 (MGAGASAEEKHSRELEKKLKE). Gly2 is lipidated: N-myristoyl glycine. The span at 7 to 21 (AEEKHSRELEKKLKE) shows a compositional bias: basic and acidic residues. The region spanning 28–350 (RTVKLLLLGA…KENLKDCGLF (323 aa)) is the G-alpha domain. Residues 31-44 (KLLLLGAGESGKST) are G1 motif. GTP contacts are provided by residues 36-43 (GAGESGKS), 171-177 (LRSRVKT), 196-200 (DVGGQ), 265-268 (NKKD), and Ala322. Mg(2+) is bound by residues Ser43 and Thr177. The G2 motif stretch occupies residues 169–177 (DVLRSRVKT). The segment at 192-201 (FRMFDVGGQR) is G3 motif. The segment at 261 to 268 (VLFLNKKD) is G4 motif. The G5 motif stretch occupies residues 320 to 325 (TCATDT).

Belongs to the G-alpha family. G(i/o/t/z) subfamily. In terms of assembly, g proteins are composed of 3 units; alpha, beta and gamma. The alpha chain contains the guanine nucleotide binding site.

Functionally, guanine nucleotide-binding proteins (G proteins) are involved as modulators or transducers in various transmembrane signaling systems. Transducin is an amplifier and one of the transducers of a visual impulse that performs the coupling between rhodopsin and cGMP-phosphodiesterase. The polypeptide is Guanine nucleotide-binding protein G(t) subunit alpha (gnat) (Xenopus laevis (African clawed frog)).